Here is a 124-residue protein sequence, read N- to C-terminus: Sulfiredoxin (124 aa).

Belongs to the sulfiredoxin family. As to quaternary structure, interacts with tpx1 in response to oxidative stress.

It localises to the cytoplasm. The protein resides in the nucleus. The enzyme catalyses S-hydroxy-S-oxy-L-cysteinyl-[peroxiredoxin] + [protein]-dithiol + ATP = S-hydroxy-L-cysteinyl-[peroxiredoxin] + [protein]-disulfide + ADP + phosphate. Functionally, contributes to oxidative stress resistance by reducing cysteine-sulfinic acid formed under exposure to oxidants in a peroxiredoxin. May catalyze the reduction in a multi-step process by acting both as a specific phosphotransferase and a thioltransferase. The sequence is that of Sulfiredoxin (srx1) from Schizosaccharomyces pombe (strain 972 / ATCC 24843) (Fission yeast).